The sequence spans 446 residues: Minor teichoic acid biosynthesis protein GgaA (446 aa).

It belongs to the glycosyltransferase 2 family.

It functions in the pathway cell wall biogenesis; poly(glucopyranosyl N-acetylgalactosamine 1-phosphate) teichoic acid biosynthesis. Involved in the biosynthesis of galactosamine-containing minor teichoic acid, a non-essential cell wall polymer in B.subtilis 168. The chain is Minor teichoic acid biosynthesis protein GgaA (ggaA) from Bacillus subtilis (strain 168).